The sequence spans 435 residues: Methylenetetrahydrofolate--tRNA-(uracil-5-)-methyltransferase TrmFO (435 aa).

FAD is bound at residue glycine 7 to glycine 12.

The protein belongs to the MnmG family. TrmFO subfamily. Requires FAD as cofactor.

The protein localises to the cytoplasm. The enzyme catalyses uridine(54) in tRNA + (6R)-5,10-methylene-5,6,7,8-tetrahydrofolate + NADH + H(+) = 5-methyluridine(54) in tRNA + (6S)-5,6,7,8-tetrahydrofolate + NAD(+). It carries out the reaction uridine(54) in tRNA + (6R)-5,10-methylene-5,6,7,8-tetrahydrofolate + NADPH + H(+) = 5-methyluridine(54) in tRNA + (6S)-5,6,7,8-tetrahydrofolate + NADP(+). In terms of biological role, catalyzes the folate-dependent formation of 5-methyl-uridine at position 54 (M-5-U54) in all tRNAs. The sequence is that of Methylenetetrahydrofolate--tRNA-(uracil-5-)-methyltransferase TrmFO from Thermotoga petrophila (strain ATCC BAA-488 / DSM 13995 / JCM 10881 / RKU-1).